The chain runs to 278 residues: 4-deoxy-L-threo-5-hexosulose-uronate ketol-isomerase (278 aa).

Residues H196, H198, E203, and H245 each contribute to the Zn(2+) site.

This sequence belongs to the KduI family. The cofactor is Zn(2+).

The catalysed reaction is 5-dehydro-4-deoxy-D-glucuronate = 3-deoxy-D-glycero-2,5-hexodiulosonate. The protein operates within glycan metabolism; pectin degradation; 2-dehydro-3-deoxy-D-gluconate from pectin: step 4/5. Catalyzes the isomerization of 5-dehydro-4-deoxy-D-glucuronate to 3-deoxy-D-glycero-2,5-hexodiulosonate. The protein is 4-deoxy-L-threo-5-hexosulose-uronate ketol-isomerase of Yersinia enterocolitica serotype O:8 / biotype 1B (strain NCTC 13174 / 8081).